The following is a 361-amino-acid chain: GDSL esterase/lipase At4g18970 (361 aa).

A signal peptide spans 1-22 (MARVCVMMMAMAIAMAMNIAMG). The Nucleophile role is filled by Ser35. Residues Asp325 and His328 contribute to the active site.

The protein belongs to the 'GDSL' lipolytic enzyme family.

The protein resides in the secreted. The protein is GDSL esterase/lipase At4g18970 of Arabidopsis thaliana (Mouse-ear cress).